Consider the following 1054-residue polypeptide: FERM, ARHGEF and pleckstrin domain-containing protein 2 (1054 aa).

The 281-residue stretch at leucine 44–aspartate 324 folds into the FERM domain. 2 positions are modified to phosphoserine: serine 389 and serine 439. Positions glutamate 421–arginine 527 are disordered. A compositionally biased stretch (low complexity) spans proline 468–proline 492. One can recognise a DH domain in the interval glutamate 535–isoleucine 726. The PH 1 domain occupies glutamate 755 to glutamine 852. The tract at residues serine 856 to arginine 894 is disordered. A PH 2 domain is found at glutamate 929–serine 1026. Residues glycine 1029–glutamate 1054 form a disordered region.

As to quaternary structure, interacts with PLXNA1. Interaction with PLXNA1 or PIP5K1C lowers its guanine nucleotide exchange activity. Dissociates from PLXNA1 when SEMA3A binds to the receptor. Interacts with PIP5K1C via its FERM domain. The interaction with PIP5K1C is enhanced by SEMA3A binding. Interacts with RAC1.

Functionally, functions as a guanine nucleotide exchange factor that activates RAC1. May have relatively low activity. Plays a role in the response to class 3 semaphorins and remodeling of the actin cytoskeleton. Plays a role in TNFSF11-mediated osteoclast differentiation, especially in podosome rearrangement and reorganization of the actin cytoskeleton. Regulates the activation of ITGB3, integrin signaling and cell adhesion. In Homo sapiens (Human), this protein is FERM, ARHGEF and pleckstrin domain-containing protein 2 (FARP2).